The primary structure comprises 57 residues: Small ribosomal subunit protein bS21 (57 aa).

The segment at 32-57 (VRKRKHFEKPSVKRKKKSEAARKRKF) is disordered. A compositionally biased stretch (basic residues) spans 33 to 57 (RKRKHFEKPSVKRKKKSEAARKRKF).

Belongs to the bacterial ribosomal protein bS21 family.

In Shouchella clausii (strain KSM-K16) (Alkalihalobacillus clausii), this protein is Small ribosomal subunit protein bS21.